Reading from the N-terminus, the 195-residue chain is UPF0301 protein Bpro_1142 (195 aa).

The protein belongs to the UPF0301 (AlgH) family.

This is UPF0301 protein Bpro_1142 from Polaromonas sp. (strain JS666 / ATCC BAA-500).